The chain runs to 438 residues: Beta-1,3-galactosyl-O-glycosyl-glycoprotein beta-1,6-N-acetylglucosaminyltransferase 3 (438 aa).

Residues 1 to 6 (MVQWKR) are Cytoplasmic-facing. A helical; Signal-anchor for type II membrane protein membrane pass occupies residues 7 to 26 (LCQLHYLWALGCYMLLATVA). At 27–438 (LKLSFRLKCD…RYKAIYGTEL (412 aa)) the chain is on the lumenal side. Cystine bridges form between Cys-70–Cys-227, Cys-161–Cys-382, Cys-182–Cys-209, and Cys-391–Cys-423. N-linked (GlcNAc...) asparagine glycosylation is present at Asn-289.

This sequence belongs to the glycosyltransferase 14 family. N-glycosylated. As to expression, primarily expressed in mucus-secreting tissues. Expressed in colon, kidney, small intestine, trachea, and stomach, where mucin is produced.

Its subcellular location is the golgi apparatus membrane. The enzyme catalyses a 3-O-[beta-D-galactosyl-(1-&gt;3)-N-acetyl-alpha-D-galactosaminyl]-L-seryl-[protein] + UDP-N-acetyl-alpha-D-glucosamine = 3-O-{beta-D-galactosyl-(1-&gt;3)-[N-acetyl-beta-D-glucosaminyl-(1-&gt;6)]-N-acetyl-alpha-D-galactosaminyl}-L-seryl-[protein] + UDP + H(+). It catalyses the reaction a 3-O-[beta-D-galactosyl-(1-&gt;3)-N-acetyl-alpha-D-galactosaminyl]-L-threonyl-[protein] + UDP-N-acetyl-alpha-D-glucosamine = a 3-O-{beta-D-galactosyl-(1-&gt;3)-[N-acetyl-beta-D-glucosaminyl-(1-&gt;6)]-N-acetyl-alpha-D-galactosaminyl}-L-threonyl-[protein] + UDP + H(+). The catalysed reaction is a beta-D-Gal-(1-&gt;4)-beta-D-GlcNAc-(1-&gt;3)-beta-D-Gal-(1-&gt;4)-beta-D-GlcNAc derivative + UDP-N-acetyl-alpha-D-glucosamine = a beta-D-Gal-(1-&gt;4)-beta-D-GlcNAc-(1-&gt;3)-[beta-D-GlcNAc-(1-&gt;6)]-beta-D-Gal-(1-&gt;4)-N-acetyl-beta-D-glucosaminyl derivative + UDP + H(+). It carries out the reaction 3-O-[N-acetyl-beta-D-glucosaminyl-(1-&gt;3)-N-acetyl-alpha-D-galactosaminyl]-L-seryl-[protein] + UDP-N-acetyl-alpha-D-glucosamine = 3-O-[N-acetyl-beta-D-glucosaminyl-(1-&gt;3)-[N-acetyl-beta-D-glucosaminyl-(1-&gt;6)]-N-acetyl-alpha-D-galactosaminyl]-L-seryl-[protein] + UDP + H(+). The enzyme catalyses a 3-O-[N-acetyl-beta-D-glucosaminyl-(1-&gt;3)-N-acetyl-alpha-D-galactosaminyl]-L-threonyl-[protein] + UDP-N-acetyl-alpha-D-glucosamine = 3-O-[N-acetyl-beta-D-glucosaminyl-(1-&gt;3)-[N-acetyl-beta-D-glucosaminyl-(1-&gt;6)]-N-acetyl-alpha-D-galactosaminyl]-L-threonyl-[protein] + UDP + H(+). Its pathway is protein modification; protein glycosylation. Glycosyltransferase that can synthesize all known mucin beta 6 N-acetylglucosaminides. Mediates core 2 and core 4 O-glycan branching, 2 important steps in mucin-type biosynthesis. Also has I-branching enzyme activity by converting linear into branched poly-N-acetyllactosaminoglycans, leading to introduce the blood group I antigen during embryonic development. The protein is Beta-1,3-galactosyl-O-glycosyl-glycoprotein beta-1,6-N-acetylglucosaminyltransferase 3 (GCNT3) of Homo sapiens (Human).